The following is a 341-amino-acid chain: Eukaryotic translation initiation factor 3 subunit I (341 aa).

6 WD repeats span residues 8-47 (GHERSLNQIVFNSEGDLLFSASKDSVVNAWYTSNGERLGT), 56-95 (GHNGSVWTVAVDSQTRFLLTGGADNAMKLWEVKTGECLYT), 151-190 (LSGSRATVAIWAPLSDYIITGHESGKIAKYDVKTGEEVQA), 194-233 (EHSALISDIQLSPDGTYFITASKDKTARLWDIETLEVMKV), 235-274 (TTETPVNSAVITPDRPYIILGGGQDAMNVTTTSQRAGKFE), and 291-331 (GHFG…RSRP).

It belongs to the eIF-3 subunit I family. As to quaternary structure, component of the eukaryotic translation initiation factor 3 (eIF-3) complex.

It localises to the cytoplasm. Functionally, component of the eukaryotic translation initiation factor 3 (eIF-3) complex, which is involved in protein synthesis of a specialized repertoire of mRNAs and, together with other initiation factors, stimulates binding of mRNA and methionyl-tRNAi to the 40S ribosome. The eIF-3 complex specifically targets and initiates translation of a subset of mRNAs involved in cell proliferation. This Cryptococcus neoformans var. neoformans serotype D (strain B-3501A) (Filobasidiella neoformans) protein is Eukaryotic translation initiation factor 3 subunit I.